Reading from the N-terminus, the 262-residue chain is 27 kDa lipoprotein antigen (262 aa).

Residues 1-28 (MSASCAVPRLTRFAVFAVAGATALSLSA) form the signal peptide. Low complexity-rich tracts occupy residues 28–57 (ACGSSNKSSSTSTSTSTSTSTVTSAAPSST) and 148–158 (STPGGASSTPP). Disordered regions lie at residues 28–60 (ACGSSNKSSSTSTSTSTSTSTVTSAAPSSTPNA) and 138–171 (VNGTCPKPHESTPGGASSTPPSGSPSPAPAKPAW). Cys29 carries N-palmitoyl cysteine lipidation. Cys29 carries the S-diacylglycerol cysteine lipid modification.

It localises to the cell membrane. The protein is 27 kDa lipoprotein antigen (Mi43) of Mycobacterium intracellulare.